The primary structure comprises 364 residues: Peptide chain release factor 1 (364 aa).

Glutamine 238 carries the N5-methylglutamine modification.

Belongs to the prokaryotic/mitochondrial release factor family. Post-translationally, methylated by PrmC. Methylation increases the termination efficiency of RF1.

The protein resides in the cytoplasm. In terms of biological role, peptide chain release factor 1 directs the termination of translation in response to the peptide chain termination codons UAG and UAA. The polypeptide is Peptide chain release factor 1 (Psychrobacter sp. (strain PRwf-1)).